Here is a 504-residue protein sequence, read N- to C-terminus: uncharacterized protein (504 aa).

3 helical membrane passes run 146–166 (TSAG…INIA), 196–216 (SSAA…ADVL), and 330–350 (SMAL…VAVA). A nucleoside 3',5'-cyclic phosphate is bound at residue 372–492 (FLNIDVPLQA…EIAYGVARTR (121 aa)).

The protein resides in the cell membrane. This is an uncharacterized protein from Mycobacterium tuberculosis (strain CDC 1551 / Oshkosh).